We begin with the raw amino-acid sequence, 521 residues long: ATP synthase subunit beta (521 aa).

2 stretches are compositionally biased toward low complexity: residues 1-21 (MAKA…AAKA) and 28-42 (PKTT…TKSG). The disordered stretch occupies residues 1–42 (MAKAATPKTTAAAEAKPAAKAPAKKAAPKTTAAAKPAATKSG). 199 to 206 (GGAGVGKT) is an ATP binding site.

This sequence belongs to the ATPase alpha/beta chains family. F-type ATPases have 2 components, CF(1) - the catalytic core - and CF(0) - the membrane proton channel. CF(1) has five subunits: alpha(3), beta(3), gamma(1), delta(1), epsilon(1). CF(0) has three main subunits: a(1), b(2) and c(9-12). The alpha and beta chains form an alternating ring which encloses part of the gamma chain. CF(1) is attached to CF(0) by a central stalk formed by the gamma and epsilon chains, while a peripheral stalk is formed by the delta and b chains.

The protein localises to the cell inner membrane. The catalysed reaction is ATP + H2O + 4 H(+)(in) = ADP + phosphate + 5 H(+)(out). Its function is as follows. Produces ATP from ADP in the presence of a proton gradient across the membrane. The catalytic sites are hosted primarily by the beta subunits. This is ATP synthase subunit beta from Brucella abortus (strain 2308).